Consider the following 367-residue polypeptide: Prenyltransferase idtC (367 aa).

Residues 1-22 form the signal peptide; the sequence is MTTLAWFAGRSMVLDLAALTSA. Residues 32 to 42 show a composition bias toward low complexity; that stretch reads TSTPTSTPTST. Residues 32 to 84 are disordered; it reads TSTPTSTPTSTDKAGTPPGSTIHHYGYPQGSVTKPNNSKTEKENGSPKDSKGN. Asparagine 67 carries N-linked (GlcNAc...) asparagine glycosylation. Residues 70-82 show a composition bias toward basic and acidic residues; the sequence is KTEKENGSPKDSK. A substrate-binding site is contributed by histidine 132. The Mg(2+) site is built by aspartate 139 and aspartate 143. Arginine 148 is a binding site for substrate. N-linked (GlcNAc...) asparagine glycosylation is present at asparagine 150. Substrate-binding residues include lysine 233, threonine 234, glutamine 264, asparagine 271, and lysine 281.

The protein belongs to the FPP/GGPP synthase family. The cofactor is Mg(2+).

It participates in secondary metabolite biosynthesis. Functionally, prenyltransferase; part of the gene cluster that mediates the biosynthesis of paspalitrems, indole-diterpene (IDT) mycotoxins that are potent tremorgens in mammals. The geranylgeranyl diphosphate (GGPP) synthase idtG is proposed to catalyze the first step in IDT biosynthesis via catalysis of a series of iterative condensations of isopentenyl diphosphate (IPP) with dimethylallyl diphosphate (DMAPP), geranyl diphosphate (GPP), and farnesyl diphosphate (FPP), to form GGPP. Condensation of indole-3-glycerol phosphate with GGPP by the prenyltransferase idtC then forms 3-geranylgeranylindole (3-GGI). Epoxidation of the two terminal alkenes of the geranylgeranyl moiety by the FAD-dependent monooxygenase idtM, and cyclization by the terpene cyclase idtB then leads to the production of paspaline. The cytochrome P450 monooxygenase idtP then catalyzes oxidative elimination of the pendant methyl group at C-12 of paspaline and generates the C-10 ketone to yield 13-desoxypaxilline. The cytochrome P450 monooxygenase idtQ may catalyze the C-13 oxidation of 13-desoxypaxilline to afford paxilline. Considering that both paspalicine and paxilline were detected in C.paspali, idtQ also catalyzes the formation of paspalinine from 13-desoxypaxilline via paspalicine as an intermediate. Finally, the alpha-prenyltransferase idtF prenylates paspalinine at the C-20 or the C-21 positions to yield paspalitrems A and C, respectively. The hydroxylation of paspalitrem A at C-32 by a still unknown oxidase affords paspalitrem B. The protein is Prenyltransferase idtC of Claviceps paspali (Rye ergot fungus).